The following is a 37-amino-acid chain: Cytochrome b6-f complex subunit 7 (37 aa).

Residues 11–29 (AVLLMVLVLVGLAWGFLLL) form a helical membrane-spanning segment.

The protein belongs to the PetM family. The 4 large subunits of the cytochrome b6-f complex are cytochrome b6, subunit IV (17 kDa polypeptide, PetD), cytochrome f and the Rieske protein, while the 4 small subunits are PetG, PetL, PetM and PetN. The complex functions as a dimer.

It localises to the cellular thylakoid membrane. Its function is as follows. Component of the cytochrome b6-f complex, which mediates electron transfer between photosystem II (PSII) and photosystem I (PSI), cyclic electron flow around PSI, and state transitions. In Rippkaea orientalis (strain PCC 8801 / RF-1) (Cyanothece sp. (strain PCC 8801)), this protein is Cytochrome b6-f complex subunit 7.